Here is a 241-residue protein sequence, read N- to C-terminus: Uridylate kinase (241 aa).

K15–G18 serves as a coordination point for ATP. The tract at residues G23 to G28 is involved in allosteric activation by GTP. G57 contributes to the UMP binding site. ATP is bound by residues G58 and R62. UMP is bound by residues D77 and T138–T145. ATP-binding residues include T165, Y171, and D174.

The protein belongs to the UMP kinase family. As to quaternary structure, homohexamer.

The protein localises to the cytoplasm. The catalysed reaction is UMP + ATP = UDP + ADP. It participates in pyrimidine metabolism; CTP biosynthesis via de novo pathway; UDP from UMP (UMPK route): step 1/1. Allosterically activated by GTP. Inhibited by UTP. Catalyzes the reversible phosphorylation of UMP to UDP. The protein is Uridylate kinase of Serratia proteamaculans (strain 568).